A 108-amino-acid polypeptide reads, in one-letter code: Protein ORFa in retron Ec67 (108 aa).

The sequence is that of Protein ORFa in retron Ec67 from Escherichia coli.